The chain runs to 113 residues: MNELKHMACVPCAEAGSPLAADEIDRLRQELPDWEVVTEEGMVRLRRTFTFPDFGQALAFTNRVGELAEAEGHHPRLVTEWGRVTVEWWTHSAGGLHRNDFIMAARTGGLHEG.

It belongs to the pterin-4-alpha-carbinolamine dehydratase family.

It catalyses the reaction (4aS,6R)-4a-hydroxy-L-erythro-5,6,7,8-tetrahydrobiopterin = (6R)-L-erythro-6,7-dihydrobiopterin + H2O. In Chlorobium limicola (strain DSM 245 / NBRC 103803 / 6330), this protein is Putative pterin-4-alpha-carbinolamine dehydratase.